The sequence spans 232 residues: Chaperone protein CssC (232 aa).

Residues 1–20 (MKSKLIILLMLVPFSSFSTE) form the signal peptide.

The protein belongs to the periplasmic pilus chaperone family.

It localises to the periplasm. In terms of biological role, involved in the biogenesis of the CS6 fimbria. The protein is Chaperone protein CssC (cssC) of Escherichia coli.